We begin with the raw amino-acid sequence, 1111 residues long: Atrial natriuretic peptide-converting enzyme (1111 aa).

Over 1-112 the chain is Cytoplasmic; that stretch reads MGRVSFNVRV…QKLVTANLLR (112 aa). A DDNN motif motif is present at residues 93 to 96; that stretch reads ADSS. The helical; Signal-anchor for type II membrane protein transmembrane segment at 113–133 threads the bilayer; that stretch reads FLLLVLIPCICALIVLLAILL. Over 134 to 1111 the chain is Extracellular; the sequence is SFVGTLKKVY…QTFLQKKSQG (978 aa). Asparagine 147 carries N-linked (GlcNAc...) asparagine glycosylation. Residues 199 to 325 enclose the FZ 1 domain; the sequence is GNTSTCVNIT…SDASRICFSL (127 aa). 31 disulfide bridges follow: cysteine 204-cysteine 264, cysteine 212-cysteine 257, cysteine 248-cysteine 288, cysteine 277-cysteine 322, cysteine 281-cysteine 305, cysteine 335-cysteine 348, cysteine 343-cysteine 361, cysteine 355-cysteine 370, cysteine 372-cysteine 384, cysteine 379-cysteine 397, cysteine 391-cysteine 406, cysteine 408-cysteine 421, cysteine 416-cysteine 434, cysteine 428-cysteine 443, cysteine 445-cysteine 458, cysteine 453-cysteine 471, cysteine 465-cysteine 480, cysteine 521-cysteine 584, cysteine 529-cysteine 577, cysteine 568-cysteine 606, cysteine 595-cysteine 636, cysteine 599-cysteine 623, cysteine 646-cysteine 658, cysteine 653-cysteine 671, cysteine 665-cysteine 680, cysteine 682-cysteine 696, cysteine 690-cysteine 709, cysteine 703-cysteine 718, cysteine 721-cysteine 733, cysteine 728-cysteine 746, and cysteine 740-cysteine 755. N-linked (GlcNAc...) asparagine glycosylation is present at asparagine 296. 4 LDL-receptor class A domains span residues 334 to 371, 371 to 407, 407 to 444, and 444 to 481; these read LCGGGESFLCTSGLCISKKLQCNGYNDCDDWSDEAHCN, NCSEDLFHCGTGKCLHHSLVCDGYDDCGDLSDEQNCD, DCNLTKEHRCGDGRCIAAEWVCDGDHDCVDKSDEVNCS, and SCPSQGLVECRSGQCIPSTFQCDGDEDCKDGSDEENCS. N-linked (GlcNAc...) asparagine glycosylation is present at asparagine 409. An FZ 2 domain is found at 516 to 639; that stretch reads SNCSHCEPIT…SSDNQTCLLP (124 aa). Asparagine 535 carries an N-linked (GlcNAc...) asparagine glycan. LDL-receptor class A domains follow at residues 645 to 681, 681 to 719, and 720 to 756; these read ECSPSHFKCRSGRCVLGSRRCDGQADCDDDSDEENCG, GCKERDLWECPLNKQCLKHTLICDGFPDCSDSMDEKNCS, and FCQDDELECANHECVPRDLWCDGWTDCSDSSDEWGCV. Residues 756–851 enclose the SRCR domain; the sequence is VTLSKNGNSS…SGSEISLLCT (96 aa). The N-linked (GlcNAc...) asparagine glycan is linked to asparagine 763. 4 disulfide bridges follow: cysteine 855/cysteine 977, cysteine 893/cysteine 909, cysteine 991/cysteine 1056, and cysteine 1020/cysteine 1035. The Peptidase S1 domain maps to 867–1100; it reads ILGGRTSRPG…FVDWIERQIY (234 aa). Residues histidine 908 and aspartate 957 each act as charge relay system in the active site. Serine 1050 functions as the Charge relay system in the catalytic mechanism.

The protein belongs to the peptidase S1 family. In terms of processing, N-glycosylated; required for processing and activation. Post-translationally, activated through proteolytic processing by a trypsin-like protease; cleaved into a N-terminal propeptide and an activated corin protease fragment. Atrial natriuretic peptide-converting enzyme, 180 kDa soluble fragment is produced by cleavage by ADAM10. Cleavage by ADAM10 to produce soluble 180 kDa soluble fragment takes place after the transmembrane region and before FZ 1. A disulfide bond links the activated corin protease fragment and the N-terminal propeptide. The disulfide bond also links the activated corin protease fragment with Atrial natriuretic peptide-converting enzyme, 180 kDa soluble fragment. Specifically expressed in heart. Also detected in kidney, aorta, brain and testis. In kidney, present in epithelial cells, with segmental expression in the proximal tubule, thick ascending limb, connecting tubule, and throughout the collecting duct (at protein level).

The protein localises to the cell membrane. It is found in the cytoplasmic vesicle. Its subcellular location is the secreted. Its function is as follows. Serine-type endopeptidase involved in atrial natriuretic peptide (NPPA) processing. Converts through proteolytic cleavage the non-functional propeptide NPPA into the active hormone, thereby regulating blood pressure in heart and promoting natriuresis, diuresis and vasodilation. Proteolytic cleavage of pro-NPPA also plays a role in female pregnancy by promoting trophoblast invasion and spiral artery remodeling in uterus. Also acts as a regulator of sodium reabsorption in kidney. May also process pro-NPPB the B-type natriuretic peptide. The polypeptide is Atrial natriuretic peptide-converting enzyme (Corin) (Rattus norvegicus (Rat)).